A 293-amino-acid polypeptide reads, in one-letter code: Ribosomal protein L11 methyltransferase (293 aa).

S-adenosyl-L-methionine-binding residues include Thr145, Gly166, Asp188, and Asn230.

This sequence belongs to the methyltransferase superfamily. PrmA family.

The protein localises to the cytoplasm. The enzyme catalyses L-lysyl-[protein] + 3 S-adenosyl-L-methionine = N(6),N(6),N(6)-trimethyl-L-lysyl-[protein] + 3 S-adenosyl-L-homocysteine + 3 H(+). Its function is as follows. Methylates ribosomal protein L11. The polypeptide is Ribosomal protein L11 methyltransferase (Escherichia coli (strain SMS-3-5 / SECEC)).